The primary structure comprises 486 residues: Pentatricopeptide repeat-containing protein At3g06430, chloroplastic (486 aa).

The transit peptide at 1 to 36 directs the protein to the chloroplast; sequence MASMSLSFSSSLCSSRIPEGKRRFRHRDVGIVRCVL. PPR repeat units follow at residues 123-157, 158-188, 194-228, 229-264, 265-299, 300-334, 335-369, 370-404, 405-439, and 440-470; these read KEGTYMKLLVLLGKSGQPNRAQKLFDEMLEEGLEP, TVELYTALLAAYTRSNLIDDAFSILDKMKSF, DVFTYSTLLKACVDASQFDLVDSLYKEMDERLITP, NTVTQNIVLSGYGRVGRFDQMEKVLSDMLVSTACKP, DVWTMNIILSVFGNMGKIDMMESWYEKFRNFGIEP, ETRTFNILIGSYGKKRMYDKMSSVMEYMRKLEFPW, TTSTYNNIIEAFADVGDAKNMELTFDQMRSEGMKA, DTKTFCCLINGYANAGLFHKVISSVQLAAKFEIPE, NTAFYNAVISACAKADDLIEMERVYIRMKERQCVC, and DSRTFEIMVEAYEKEGMNDKIYYLEQERQKL.

This sequence belongs to the PPR family. P subfamily.

Its subcellular location is the plastid. It localises to the chloroplast. This is Pentatricopeptide repeat-containing protein At3g06430, chloroplastic (EMB2750) from Arabidopsis thaliana (Mouse-ear cress).